We begin with the raw amino-acid sequence, 326 residues long: Toluene-4-monooxygenase system, ferredoxin--NAD(+) reductase component (326 aa).

The 2Fe-2S ferredoxin-type domain maps to 1-92 (MFNIQSDDLL…DLKIKVINRA (92 aa)). The [2Fe-2S] cluster site is built by Cys36, Cys41, Cys44, and Cys76. A ferredoxin-reductase region spans residues 95–326 (RASHPPKRFS…FEAIHFDRFF (232 aa)). Residues 100 to 195 (PKRFSTRVVS…DGPYGLSVLK (96 aa)) enclose the FAD-binding FR-type domain. Residues 146–149 (RAYS), 162–164 (IVK), and 170–172 (KVS) contribute to the FAD site.

It belongs to the bacterial ring-hydroxylating dioxygenase ferredoxin reductase family. Monomer. The alkene monooxygenase multicomponent enzyme system is composed of an electron transfer component and a monooxygenase component interacting with the effector protein TmoD. The electron transfer component is composed of a ferredoxin reductase (TmoF) and a ferredoxin (TmoC), and the monooxygenase component is formed by a heterohexamer (dimer of heterotrimers) of two alpha subunits (TmoA), two beta subunits (TmoE) and two gamma subunits (TmoB). FAD is required as a cofactor. [2Fe-2S] cluster serves as cofactor.

It catalyses the reaction 2 reduced [2Fe-2S]-[ferredoxin] + NAD(+) + H(+) = 2 oxidized [2Fe-2S]-[ferredoxin] + NADH. Its pathway is xenobiotic degradation; toluene degradation. Functionally, reductase component of the toluene-4-monooxygenase multicomponent enzyme system which catalyzes the O2- and NADH-dependent hydroxylation of toluene to form p-cresol. Ferredoxin reductase catalyzes the transfer of electrons from NADH to ferredoxin (TmoC). The protein is Toluene-4-monooxygenase system, ferredoxin--NAD(+) reductase component of Ectopseudomonas mendocina (Pseudomonas mendocina).